The following is a 587-amino-acid chain: Arginine--tRNA ligase (587 aa).

Positions 127 to 137 match the 'HIGH' region motif; the sequence is PNLAKEMHVGH.

Belongs to the class-I aminoacyl-tRNA synthetase family. Monomer.

It is found in the cytoplasm. The enzyme catalyses tRNA(Arg) + L-arginine + ATP = L-arginyl-tRNA(Arg) + AMP + diphosphate. This Pseudomonas paraeruginosa (strain DSM 24068 / PA7) (Pseudomonas aeruginosa (strain PA7)) protein is Arginine--tRNA ligase.